The primary structure comprises 495 residues: Glycogen synthase (495 aa).

Lysine 15 is an ADP-alpha-D-glucose binding site.

Belongs to the glycosyltransferase 1 family. Bacterial/plant glycogen synthase subfamily.

The catalysed reaction is [(1-&gt;4)-alpha-D-glucosyl](n) + ADP-alpha-D-glucose = [(1-&gt;4)-alpha-D-glucosyl](n+1) + ADP + H(+). The protein operates within glycan biosynthesis; glycogen biosynthesis. Synthesizes alpha-1,4-glucan chains using ADP-glucose. In Variovorax paradoxus (strain S110), this protein is Glycogen synthase.